A 209-amino-acid chain; its full sequence is Uracil phosphoribosyltransferase (209 aa).

Residues R79, R104, and 131-139 (DPMLATGGT) each bind 5-phospho-alpha-D-ribose 1-diphosphate. Uracil-binding positions include I194 and 199-201 (GDA). D200 contributes to the 5-phospho-alpha-D-ribose 1-diphosphate binding site.

The protein belongs to the UPRTase family. The cofactor is Mg(2+).

The enzyme catalyses UMP + diphosphate = 5-phospho-alpha-D-ribose 1-diphosphate + uracil. The protein operates within pyrimidine metabolism; UMP biosynthesis via salvage pathway; UMP from uracil: step 1/1. Its activity is regulated as follows. Allosterically activated by GTP. Functionally, catalyzes the conversion of uracil and 5-phospho-alpha-D-ribose 1-diphosphate (PRPP) to UMP and diphosphate. The protein is Uracil phosphoribosyltransferase of Pseudoalteromonas translucida (strain TAC 125).